The following is a 400-amino-acid chain: NADH-quinone oxidoreductase subunit D (400 aa).

This sequence belongs to the complex I 49 kDa subunit family. In terms of assembly, NDH-1 is composed of 14 different subunits. Subunits NuoB, C, D, E, F, and G constitute the peripheral sector of the complex.

Its subcellular location is the cell inner membrane. It catalyses the reaction a quinone + NADH + 5 H(+)(in) = a quinol + NAD(+) + 4 H(+)(out). Functionally, NDH-1 shuttles electrons from NADH, via FMN and iron-sulfur (Fe-S) centers, to quinones in the respiratory chain. The immediate electron acceptor for the enzyme in this species is believed to be a menaquinone. Couples the redox reaction to proton translocation (for every two electrons transferred, four hydrogen ions are translocated across the cytoplasmic membrane), and thus conserves the redox energy in a proton gradient. This is NADH-quinone oxidoreductase subunit D from Chlorobium chlorochromatii (strain CaD3).